The chain runs to 797 residues: Short transient receptor potential channel 4-associated protein (797 aa).

Position 2 is an N-acetylalanine (Ala2). Residues 2-400 (AAAPVAAGSG…VLYVLCVLLM (399 aa)) form an interaction with TNFRSF1A region.

In terms of assembly, component of the DCX(TRPC4AP) E3 ubiquitin ligase complex, at least composed of CUL4A, DDB1, TRPC4AP/TRUSS and RBX1. Interacts with MYC. Constitutively associated with TNFRSF1A. Directly interacts with TRADD, TRAF2, CHUK, IKBKB and IKBKG. Interacts with TRPC1, TRPC4 and TRPC5. (Microbial infection) Interacts with Hepatitis B virus (HBV) protein X; leading to prevent ubiquitination of TRPC4AP by SKP2. Phosphorylated by GSK3B; phosphorylation is required for ubiquitination. Post-translationally, ubiquitinated by a SCF (SKP1-CUL1-F-box protein) E3 ubiquitin-protein ligase containing SKP2, leading to its degradation. Phosphorylation by GSK3B is required for ubiquitination.

It localises to the cytoplasm. It is found in the perinuclear region. The protein operates within protein modification; protein ubiquitination. Its function is as follows. Substrate-recognition component of a DCX (DDB1-CUL4-X-box) E3 ubiquitin-protein ligase complex required for cell cycle control. The DCX(TRPC4AP) complex specifically mediates the polyubiquitination and subsequent degradation of MYC as part of the DesCEND (destruction via C-end degrons) pathway. The DesCEND (destruction via C-end degrons) pathway recognizes a C-degron located at the extreme C terminus of target proteins, leading to their ubiquitination and degradation. The DCX(TRPC4AP) complex specifically recognizes proteins with an arginine at the minus 3 position (R-3 motif) at the C-terminus, such as MYC, leading to their ubiquitination and degradation. Also participates in the activation of NFKB1 in response to ligation of TNFRSF1A, possibly by linking TNFRSF1A to the IKK signalosome. Involved in JNK activation via its interaction with TRAF2. Also involved in elevation of endoplasmic reticulum Ca(2+) storage reduction in response to CHRM1. This chain is Short transient receptor potential channel 4-associated protein, found in Homo sapiens (Human).